Consider the following 81-residue polypeptide: MAVRIRLKRMGAKNNPFYRIVVADSRSPRDGKTIDEIGYYNPLKNPADIKVDVEKAKKWLSNGAQPTDTVKILLKKVGVIE.

The protein belongs to the bacterial ribosomal protein bS16 family.

This chain is Small ribosomal subunit protein bS16, found in Caldicellulosiruptor saccharolyticus (strain ATCC 43494 / DSM 8903 / Tp8T 6331).